We begin with the raw amino-acid sequence, 238 residues long: Putative type I specificity subunit S.MpnORF201P (238 aa).

It belongs to the type-I restriction system S methylase family. In terms of assembly, the methyltransferase is composed of M and S polypeptides.

Its function is as follows. The specificity (S) subunit of a type I methyltransferase (MTase); this subunit dictates DNA sequence specificity. The single R subunit has multiple frameshifts and is probably not expressed. The protein is Putative type I specificity subunit S.MpnORF201P of Mycoplasma pneumoniae (strain ATCC 29342 / M129 / Subtype 1) (Mycoplasmoides pneumoniae).